The primary structure comprises 406 residues: Glycosylated lysosomal membrane protein (406 aa).

A signal peptide spans 1-35; that stretch reads MRGSVECTWGWGHCAPSPLLLWTLLLFAAPFGLLG. Topologically, residues 36–372 are lumenal; that stretch reads EKTRQVSLEV…VDGLSPLVLG (337 aa). N65, N134, N159, N187, and N230 each carry an N-linked (GlcNAc...) asparagine glycan. The chain crosses the membrane as a helical span at residues 373–393; the sequence is IMAVALGAPGLMLLGGGLVLL. At 394 to 406 the chain is on the cytoplasmic side; that stretch reads LHHKKYSEYQSIN. The short motif at 402-406 is the Lysosomal targeting motif element; that stretch reads YQSIN.

The protein belongs to the GLMP family. As to quaternary structure, interacts (via lumenal domain) with lysosomal protein MFSD1; the interaction starts while both proteins are still in the endoplasmic reticulum and is required for stabilization of MFSD1 in lysosomes but has no direct effect on its targeting to lysosomes or transporter activity. In terms of processing, highly N-glycosylated. N-glycosylation is essential for GLMP stability and for MFSD1 lysosomal localization.

It is found in the lysosome membrane. Required to protect lysosomal transporter MFSD1 from lysosomal proteolysis and for MFSD1 lysosomal localization. The protein is Glycosylated lysosomal membrane protein of Homo sapiens (Human).